The chain runs to 120 residues: Glycine cleavage system H protein (120 aa).

A Lipoyl-binding domain is found at 20–102 (DGTVGISDHA…YEGGWLFKLD (83 aa)). Position 61 is an N6-lipoyllysine (Lys-61).

The protein belongs to the GcvH family. As to quaternary structure, the glycine cleavage system is composed of four proteins: P, T, L and H. (R)-lipoate serves as cofactor.

Its function is as follows. The glycine cleavage system catalyzes the degradation of glycine. The H protein shuttles the methylamine group of glycine from the P protein to the T protein. The sequence is that of Glycine cleavage system H protein from Deinococcus radiodurans (strain ATCC 13939 / DSM 20539 / JCM 16871 / CCUG 27074 / LMG 4051 / NBRC 15346 / NCIMB 9279 / VKM B-1422 / R1).